The primary structure comprises 517 residues: DNA relaxase MbeA (517 aa).

Tyr19 (O-(5'-phospho-DNA)-tyrosine intermediate) is an active-site residue. Residues His97, Glu104, and Asn106 each coordinate a divalent metal cation. Disordered stretches follow at residues 281–310, 380–405, and 496–517; these read YSPV…QEGR, PSVR…VTQS, and SLER…SLGW. Residues 297–310 are compositionally biased toward basic and acidic residues; it reads GRGERGDDAAQEGR. The segment covering 496–510 has biased composition (basic and acidic residues); sequence SLERERQPEIQERTL.

This sequence to E.coli MbaA and MbkA. Interacts with MbeB and MbeC to form the relaxosome. Requires Mn(2+) as cofactor. Co(2+) serves as cofactor. It depends on Ni(2+) as a cofactor.

The enzyme catalyses ATP-independent breakage of single-stranded DNA, followed by passage and rejoining.. Its function is as follows. Relaxase involved in plasmid ColE1 conjugative mobilization and is thus essential to promote the specific transfer of the plasmid during conjugation. First catalyzes the specific cleavage of one of the DNA strands at oriT, forming a covalent 5'-phosphotyrosine intermediate. The nic site corresponds to 5'-(1469)CTGG/CTTA(1462)-3' in the cleaved strand. The cleaved strand is then transferred through the dedicated type IV secretion apparatus. MbeA remains covalently linked at the 5' end of the strand, and once in the recipient cell, it probably catalyzes the rejoining of the two ends of the strand, re-forming the circular plasmid DNA. Is functional in vitro without a requirement for the conjugative accessory proteins. In Escherichia coli, this protein is DNA relaxase MbeA (mbeA).